The chain runs to 467 residues: Glycogen synthase (467 aa).

Lys-16 is an ADP-alpha-D-glucose binding site.

This sequence belongs to the glycosyltransferase 1 family. Bacterial/plant glycogen synthase subfamily.

It carries out the reaction [(1-&gt;4)-alpha-D-glucosyl](n) + ADP-alpha-D-glucose = [(1-&gt;4)-alpha-D-glucosyl](n+1) + ADP + H(+). The protein operates within glycan biosynthesis; glycogen biosynthesis. Its function is as follows. Synthesizes alpha-1,4-glucan chains using ADP-glucose. The chain is Glycogen synthase from Paracoccus denitrificans (strain Pd 1222).